A 646-amino-acid chain; its full sequence is Peptidylprolyl isomerase domain and WD repeat-containing protein 1 (646 aa).

The interval 1–50 is disordered; that stretch reads MATESGSDSQLRRRRRRDPEGSEKTELSEREPALAVAGSEENDDENEERW. Residue A2 is modified to N-acetylalanine. The span at 17 to 32 shows a compositional bias: basic and acidic residues; sequence RDPEGSEKTELSEREP. WD repeat units follow at residues 88–126, 131–170, 221–260, and 278–319; these read MHRD…IEFV, SHLG…MINM, LHVS…YKFP, and KCKA…RVFD. Residues 490 to 645 form the PPIase cyclophilin-type domain; the sequence is VSDSAIVHTS…EDVSIINITV (156 aa).

Belongs to the cyclophilin-type PPIase family. PPIL1 subfamily. As to quaternary structure, identified in the spliceosome C complex.

The protein localises to the nucleus. The catalysed reaction is [protein]-peptidylproline (omega=180) = [protein]-peptidylproline (omega=0). Its activity is regulated as follows. Inhibited by cyclosporin A (CsA). Its function is as follows. PPIase that catalyzes the cis-trans isomerization of proline imidic peptide bonds in oligopeptides and may therefore assist protein folding. May be involved in pre-mRNA splicing. This is Peptidylprolyl isomerase domain and WD repeat-containing protein 1 from Mus musculus (Mouse).